The chain runs to 141 residues: 6,7-dimethyl-8-ribityllumazine synthase (141 aa).

Residues Phe11, 42–44, and 66–68 contribute to the 5-amino-6-(D-ribitylamino)uracil site; these read ALE and VVI. A (2S)-2-hydroxy-3-oxobutyl phosphate-binding site is contributed by 71–72; that stretch reads ET. His74 acts as the Proton donor in catalysis. A 5-amino-6-(D-ribitylamino)uracil-binding site is contributed by Asn98. Residue Arg112 participates in (2S)-2-hydroxy-3-oxobutyl phosphate binding.

This sequence belongs to the DMRL synthase family.

It carries out the reaction (2S)-2-hydroxy-3-oxobutyl phosphate + 5-amino-6-(D-ribitylamino)uracil = 6,7-dimethyl-8-(1-D-ribityl)lumazine + phosphate + 2 H2O + H(+). Its pathway is cofactor biosynthesis; riboflavin biosynthesis; riboflavin from 2-hydroxy-3-oxobutyl phosphate and 5-amino-6-(D-ribitylamino)uracil: step 1/2. Its function is as follows. Catalyzes the formation of 6,7-dimethyl-8-ribityllumazine by condensation of 5-amino-6-(D-ribitylamino)uracil with 3,4-dihydroxy-2-butanone 4-phosphate. This is the penultimate step in the biosynthesis of riboflavin. This chain is 6,7-dimethyl-8-ribityllumazine synthase, found in Sphingopyxis alaskensis (strain DSM 13593 / LMG 18877 / RB2256) (Sphingomonas alaskensis).